A 142-amino-acid polypeptide reads, in one-letter code: Extracellular globin-1 (142 aa).

The Globin domain occupies E1 to I142. A disulfide bond links C2 and C131. H94 serves as a coordination point for heme b.

Belongs to the globin family. As to quaternary structure, the extracellular hemoglobin of the earthworm consists of 12 subunits that have a hexagonal bilayer structure with a molecular weight near 3.8 million. Each one-twelfth subunit is composed primarily of disulfide linked trimers (chains A, B, and C) and monomers (chain D).

In Lumbricus terrestris (Common earthworm), this protein is Extracellular globin-1.